The following is a 29-amino-acid chain: Cytochrome b6-f complex subunit 8 (29 aa).

A helical transmembrane segment spans residues 3–23 (IVDIAWAALMVVFTFSLSLVV).

It belongs to the PetN family. The 4 large subunits of the cytochrome b6-f complex are cytochrome b6, subunit IV (17 kDa polypeptide, PetD), cytochrome f and the Rieske protein, while the 4 small subunits are PetG, PetL, PetM and PetN. The complex functions as a dimer.

The protein localises to the plastid. Its subcellular location is the chloroplast thylakoid membrane. Its function is as follows. Component of the cytochrome b6-f complex, which mediates electron transfer between photosystem II (PSII) and photosystem I (PSI), cyclic electron flow around PSI, and state transitions. The protein is Cytochrome b6-f complex subunit 8 of Gnetum parvifolium (Small-leaved jointfir).